The sequence spans 304 residues: Sulfate adenylyltransferase subunit 2 (304 aa).

This sequence belongs to the PAPS reductase family. CysD subfamily. Heterodimer composed of CysD, the smaller subunit, and CysN.

It catalyses the reaction sulfate + ATP + H(+) = adenosine 5'-phosphosulfate + diphosphate. Its pathway is sulfur metabolism; hydrogen sulfide biosynthesis; sulfite from sulfate: step 1/3. In terms of biological role, with CysN forms the ATP sulfurylase (ATPS) that catalyzes the adenylation of sulfate producing adenosine 5'-phosphosulfate (APS) and diphosphate, the first enzymatic step in sulfur assimilation pathway. APS synthesis involves the formation of a high-energy phosphoric-sulfuric acid anhydride bond driven by GTP hydrolysis by CysN coupled to ATP hydrolysis by CysD. This chain is Sulfate adenylyltransferase subunit 2, found in Acinetobacter baumannii (strain SDF).